We begin with the raw amino-acid sequence, 457 residues long: Carboxypeptidase N catalytic chain (457 aa).

A signal peptide spans 1–23 (MPDLPSAFLPLLLLSKFVTPVTF). A Peptidase M14 domain is found at 24–338 (RHHRYDDLVR…EALIQFLEQV (315 aa)). Residues C42 and C104 are joined by a disulfide bond. 3 residues coordinate Zn(2+): H86, E89, and H216. C271 and C311 are joined by a disulfide. The Proton donor/acceptor role is filled by E308. T400, T402, and T409 each carry an O-linked (GalNAc...) threonine glycan. The disordered stretch occupies residues 418 to 457 (SSSQVYPVQRAPGRGQGGRAKQPRTSRKKDPATKRHRGPA).

Belongs to the peptidase M14 family. In terms of assembly, tetramer of two catalytic chains and two glycosylated inactive chains. The cofactor is Zn(2+). As to expression, mainly expressed in liver. Also detected in lung, stomach, intestine, spleen and kidney.

It localises to the secreted. The protein resides in the extracellular space. It carries out the reaction Release of a C-terminal basic amino acid, preferentially lysine.. Functionally, protects the body from potent vasoactive and inflammatory peptides containing C-terminal Arg or Lys (such as kinins or anaphylatoxins) which are released into the circulation. This is Carboxypeptidase N catalytic chain (Cpn1) from Mus musculus (Mouse).